A 230-amino-acid chain; its full sequence is uncharacterized protein (230 aa).

An N-terminal signal peptide occupies residues Met-1–Arg-16. 4 helical membrane-spanning segments follow: residues Val-27–Ile-47, Leu-118–Phe-138, Phe-150–Leu-170, and Ser-172–Phe-191.

The protein resides in the cytoplasm. The protein localises to the nucleus membrane. This is an uncharacterized protein from Schizosaccharomyces pombe (strain 972 / ATCC 24843) (Fission yeast).